We begin with the raw amino-acid sequence, 401 residues long: Proline-rich protein 30 (401 aa).

A compositionally biased stretch (polar residues) spans 69–80 (PGPHFSSDSNSD). 3 disordered regions span residues 69–93 (PGPH…PRSS), 129–191 (SSSL…RGAG), and 357–401 (QSPK…KSPS). Composition is skewed to low complexity over residues 83–93 (PPHSSSHPRSS) and 129–147 (SSSL…QSPS). Composition is skewed to polar residues over residues 148-186 (RLQD…SIKS) and 357-368 (QSPKPSQCSRSL).

The sequence is that of Proline-rich protein 30 (Prr30) from Mus musculus (Mouse).